We begin with the raw amino-acid sequence, 259 residues long: MAEPGRTFNTAFAPPPPLWKHFTPENLQRLENIKKEASKGEDGRRRKKEWSPAELRSLKIPPELRFLVPPEIPSEQYSIFGEVQNLSTALPSLEEQGITQLYPSSPKPDTKSGDSSQPAQPLNHAYYLLKISKSLLLNFLEFVGILSVAPEQFEPKVEDIRNLFINAHHLLNLYRPHQARESLIMMMEAQLARTKDEIQQMDKLKEEVNAVLDQLAAEGADVGSTIQSTTKDKKGVKPEDQIPEDSKLLWDILDGKLDD.

3 disordered regions span residues 1 to 52, 99 to 118, and 223 to 242; these read MAEP…EWSP, TQLYPSSPKPDTKSGDSSQP, and GSTIQSTTKDKKGVKPEDQI. Residues 31–44 are compositionally biased toward basic and acidic residues; it reads ENIKKEASKGEDGR. Over residues 230 to 242 the composition is skewed to basic and acidic residues; it reads TKDKKGVKPEDQI.

This sequence belongs to the Mediator complex subunit 7 family. As to quaternary structure, component of the Mediator complex.

The protein localises to the nucleus. Its function is as follows. Component of the Mediator complex, a coactivator involved in the regulated transcription of nearly all RNA polymerase II-dependent genes. Mediator functions as a bridge to convey information from gene-specific regulatory proteins to the basal RNA polymerase II transcription machinery. Mediator is recruited to promoters by direct interactions with regulatory proteins and serves as a scaffold for the assembly of a functional preinitiation complex with RNA polymerase II and the general transcription factors. In Emericella nidulans (strain FGSC A4 / ATCC 38163 / CBS 112.46 / NRRL 194 / M139) (Aspergillus nidulans), this protein is Mediator of RNA polymerase II transcription subunit 7 (med7).